Reading from the N-terminus, the 777-residue chain is Cullin-3 (777 aa).

The segment at 568–596 is disordered; the sequence is YPPPKASMSNEENGPGPSSSGESMKERKP. A compositionally biased stretch (low complexity) spans 576–589; the sequence is SNEENGPGPSSSGE. A Cullin neddylation domain is found at 707 to 769; sequence DRKLEVEAAI…REYLARDEHD (63 aa). Lys-721 participates in a covalent cross-link: Glycyl lysine isopeptide (Lys-Gly) (interchain with G-Cter in NEDD8).

Belongs to the cullin family. In terms of assembly, probable component of multiple cullin-RING-based BCB (BTB-CUL3-BTB) E3 ubiquitin-protein ligase complexes formed by cul-3, rbx-1 and a variable BTB domain-containing protein acting as both, adapter to cullin and substrate recognition component. Interacts with bath-15, bath-40, bath-41, bath-42, C17F4.8, tag-303, D2045.8, F57C2.1, ZC239.15 and B0281.5. Interacts with mel-26 (via BTB domain). Interacts with dcn-1. Neddylated. Deneddylated via its interaction with the COP9 signalosome (CSN) complex.

It localises to the cytoplasm. It is found in the nucleus. It participates in protein modification; protein ubiquitination. In terms of biological role, probable core component of multiple cullin-RING-based BCB (BTB-CUL3-BTB) E3 ubiquitin-protein ligase complexes which mediate the ubiquitination and subsequent proteasomal degradation of target proteins. Probably acts as a scaffold protein which may contribute to catalysis through positioning of the substrate and the ubiquitin-conjugating enzyme. Required to target mei-3/katanin for degradation at the meiosis to mitosis transition via its neddylation and deneddylation. Functions in ubiquitin-mediated degradation of CKIs to target cki-1 for degradation. Regulates microtubule stability in the early embryo. In body wall muscles, involved in the organization of myosin thick filaments, likely by regulating the degradation of microtubule severing protein mei-1 downstream of unc-89. Together with spop-1, may promote the ubiquitination and proteasomal degradation of target bromodomain-containing proteins such as bet-1. The polypeptide is Cullin-3 (Caenorhabditis elegans).